The chain runs to 319 residues: Protein StrN (319 aa).

It participates in antibiotic biosynthesis; streptomycin biosynthesis. The protein is Protein StrN (strN) of Streptomyces griseus.